The chain runs to 304 residues: Glutamyl-Q tRNA(Asp) synthetase (304 aa).

L-glutamate-binding positions include 14 to 18 (RFAPS) and Glu-50. The 'HIGH' region motif lies at 17-27 (PSPSGPLHFGS). Zn(2+)-binding residues include Cys-106, Cys-108, Tyr-120, and Cys-124. Residues Tyr-178 and Arg-196 each coordinate L-glutamate. The 'KMSKS' region motif lies at 234–238 (KLSKQ). Residue Lys-237 coordinates ATP.

This sequence belongs to the class-I aminoacyl-tRNA synthetase family. GluQ subfamily. The cofactor is Zn(2+).

Its function is as follows. Catalyzes the tRNA-independent activation of glutamate in presence of ATP and the subsequent transfer of glutamate onto a tRNA(Asp). Glutamate is transferred on the 2-amino-5-(4,5-dihydroxy-2-cyclopenten-1-yl) moiety of the queuosine in the wobble position of the QUC anticodon. This is Glutamyl-Q tRNA(Asp) synthetase from Vibrio cholerae serotype O1 (strain ATCC 39315 / El Tor Inaba N16961).